Consider the following 995-residue polypeptide: MNNKKTATNRKGMIPNRLNKFSIRKYSVGTASILVGTTLIFGLSGHEAKAAEHTNGELNQSKNETTAPSENKTTKKVDSRQLKDNTQTATADQPKVTMSDSATVKETSSNMQSPQNATANQSTTKTSNVTTNDKSSTTYSNETDKSNLTQAKDVSTTPKTTTIKPRTLNRMAVNTVAAPQQGTNVNDKVHFSNIDIAIDKGHVNQTTGKTEFWATSSDVLKLKANYTIDDSVKEGDTFTFKYGQYFRPGSVRLPSQTQNLYNAQGNIIAKGIYDSTTNTTTYTFTNYVDQYTNVRGSFEQVAFAKRKNATTDKTAYKMEVTLGNDTYSEEIIVDYGNKKAQPLISSTNYINNEDLSRNMTAYVNQPKNTYTKQTFVTNLTGYKFNPNAKNFKIYEVTDQNQFVDSFTPDTSKLKDVTDQFDVIYSNDNKTATVDLMKGQTSSNKQYIIQQVAYPDNSSTDNGKIDYTLDTDKTKYSWSNSYSNVNGSSTANGDQKKYNLGDYVWEDTNKDGKQDANEKGIKGVYVILKDSNGKELDRTTTDENGKYQFTGLSNGTYSVEFSTPAGYTPTTANVGTDDAVDSDGLTTTGVIKDADNMTLDSGFYKTPKYSLGDYVWYDSNKDGKQDSTEKGIKGVKVTLQNEKGEVIGTTETDENGKYRFDNLDSGKYKVIFEKPAGLTQTGTNTTEDDKDADGGEVDVTITDHDDFTLDNGYYEEETSDSDSDSDSDSDSDSDSDSDSDSDSDSDSDSDSDSDSDSDSDSDSDSDSDSDSDSDSDSDSDSDSDSDSDSDSDSDSDSDSDSDSDSDSDSDSDSDSDSDSDSDSDSDSDSDSDSDSDSDSDSDSDSDSDSDSDSDSDSDNDSDSDSDSDSDSDSDSDSDSDSDSDSDSDSDSDSDSDSDSDSDSDSDSDSDSDSDSDSDSDSDSDNDSDSDSDSDSDAGKHTPAKPMSTVKDQHKTAKALPETGSENNNSNNGTLFGGLFAALGSLLLFGRRKKQNK.

An N-terminal signal peptide occupies residues 1 to 50 (MNNKKTATNRKGMIPNRLNKFSIRKYSVGTASILVGTTLIFGLSGHEAKA). The YSIRK-G/S signaling motif motif lies at 21–32 (FSIRKYSVGTAS). The interval 51 to 164 (AEHTNGELNQ…STTPKTTTIK (114 aa)) is disordered. Residues 51–495 (AEHTNGELNQ…GSSTANGDQK (445 aa)) are ligand binding A region. Over residues 56-71 (GELNQSKNETTAPSEN) the composition is skewed to polar residues. A compositionally biased stretch (basic and acidic residues) spans 72 to 83 (KTTKKVDSRQLK). Residues 84-155 (DNTQTATADQ…SNLTQAKDVS (72 aa)) show a composition bias toward polar residues. CNA-B domains follow at residues 496–606 (KYNL…YKTP) and 607–717 (KYSL…EEET). A disordered region spans residues 678–975 (TQTGTNTTED…NNSNNGTLFG (298 aa)). 2 stretches are compositionally biased toward acidic residues: residues 685-695 (TEDDKDADGGE) and 712-934 (YYEE…DSDS). Positions 958–962 (LPETG) match the LPXTG sorting signal motif. Positions 960–975 (ETGSENNNSNNGTLFG) are enriched in low complexity. T961 carries the post-translational modification Pentaglycyl murein peptidoglycan amidated threonine. Positions 962–995 (GSENNNSNNGTLFGGLFAALGSLLLFGRRKKQNK) are cleaved as a propeptide — removed by sortase.

The protein belongs to the serine-aspartate repeat-containing protein (SDr) family. As to quaternary structure, homodimerizes; via N2-Domain. Interacts with host NRXN1; this interaction mediates bacterial attachment to host cells.

It localises to the secreted. The protein localises to the cell wall. Its function is as follows. Cell surface-associated calcium-binding protein which plays an important role in adhesion and pathogenesis. Mediates interactions with components of the extracellular matrix such as host NRXN1 to promote bacterial adhesion. This Staphylococcus aureus (strain NCTC 8325 / PS 47) protein is Serine-aspartate repeat-containing protein C (sdrC).